A 309-amino-acid chain; its full sequence is Tagatose-6-phosphate kinase (309 aa).

The protein belongs to the carbohydrate kinase PfkB family. LacC subfamily.

It catalyses the reaction D-tagatofuranose 6-phosphate + ATP = D-tagatofuranose 1,6-bisphosphate + ADP + H(+). It functions in the pathway carbohydrate metabolism; D-tagatose 6-phosphate degradation; D-glyceraldehyde 3-phosphate and glycerone phosphate from D-tagatose 6-phosphate: step 1/2. This is Tagatose-6-phosphate kinase from Streptococcus sanguinis (strain SK36).